The chain runs to 287 residues: Pentatricopeptide repeat-containing protein At4g18975, chloroplastic (287 aa).

The N-terminal 34 residues, 1–34 (MALCNLNPTQGIFPLQGLSKSQEFICFSLLQSPR), are a transit peptide targeting the chloroplast. PPR repeat units follow at residues 165-199 (TMGTYDILLLAFDMDERADEAESLWNMILHTHTRS) and 201-235 (PRRLFARMIALYAHHDLHDKVIEVFADMEELKVSP).

Belongs to the PPR family. P subfamily.

It localises to the plastid. It is found in the chloroplast. The protein is Pentatricopeptide repeat-containing protein At4g18975, chloroplastic of Arabidopsis thaliana (Mouse-ear cress).